A 585-amino-acid polypeptide reads, in one-letter code: Rhizobactin siderophore biosynthesis protein RhbC (585 aa).

Belongs to the IucA/IucC family.

It functions in the pathway siderophore biosynthesis; rhizobactin biosynthesis. In Rhizobium meliloti (strain 1021) (Ensifer meliloti), this protein is Rhizobactin siderophore biosynthesis protein RhbC (rhbC).